Consider the following 264-residue polypeptide: MMQRCWQISLPLARRRLIPSLTSKRTAATEAPLDELDAFEREYLKQRIQITPFQRLLLGAGSSLASLLDPHRHDMIACLGETTGENALWNILDTMQASEEGRRILVEKPRINTRTIDLKRLEAMPPDTFGATYAKFLKDNNVTPDTRMEVHFLDDPKLAYVMTRYRECHDLVHAVLNMPTNMLCEVTVKWVEALNTGLPMCYGGAVFGAVRLRPKQRREYLRRYLPWAIENSKQMKPLMPIYWERRWEQNVDELRNELGIKLLQ.

The N-terminal 26 residues, 1–26, are a transit peptide targeting the mitochondrion; sequence MMQRCWQISLPLARRRLIPSLTSKRT. Zn(2+) contacts are provided by H169, D170, H173, and E185.

This sequence belongs to the COQ4 family. As to quaternary structure, component of a multi-subunit COQ enzyme complex. Zn(2+) serves as cofactor.

It is found in the mitochondrion inner membrane. It catalyses the reaction a 4-hydroxy-3-methoxy-5-(all-trans-polyprenyl)benzoate + H(+) = a 2-methoxy-6-(all-trans-polyprenyl)phenol + CO2. It functions in the pathway cofactor biosynthesis; ubiquinone biosynthesis. Functionally, lyase that catalyzes the C1-decarboxylation of 4-hydroxy-3-methoxy-5-(all-trans-polyprenyl)benzoic acid into 2-methoxy-6-(all-trans-polyprenyl)phenol during ubiquinone biosynthesis. The polypeptide is Ubiquinone biosynthesis protein COQ4 homolog, mitochondrial (Drosophila grimshawi (Hawaiian fruit fly)).